We begin with the raw amino-acid sequence, 315 residues long: Olfactory receptor 10A4 (315 aa).

Over Met1–Ala26 the chain is Extracellular. A glycan (N-linked (GlcNAc...) asparagine) is linked at Asn5. Residues Leu27–Ile47 traverse the membrane as a helical segment. Over Leu48–Ala55 the chain is Cytoplasmic. The helical transmembrane segment at Leu56 to Leu76 threads the bilayer. Over Val77–Thr100 the chain is Extracellular. The cysteines at positions 98 and 190 are disulfide-linked. Residues Gln101 to Tyr121 traverse the membrane as a helical segment. At Asp122 to Ile140 the chain is on the cytoplasmic side. The chain crosses the membrane as a helical span at residues Ser141–Thr161. At Thr162 to Leu198 the chain is on the extracellular side. Residues Glu199–Ser218 traverse the membrane as a helical segment. Residues Tyr219–Ala238 are Cytoplasmic-facing. The chain crosses the membrane as a helical span at residues Phe239–Thr259. Topologically, residues Tyr260–Lys272 are extracellular. Residues Lys273–Ser293 traverse the membrane as a helical segment. Topologically, residues Arg294 to Leu315 are cytoplasmic.

Belongs to the G-protein coupled receptor 1 family. Expressed in the tongue.

Its subcellular location is the cell membrane. Functionally, odorant receptor (Potential). May be involved in taste perception. The protein is Olfactory receptor 10A4 (OR10A4) of Homo sapiens (Human).